We begin with the raw amino-acid sequence, 150 residues long: Small ribosomal subunit protein eS19 (150 aa).

The protein belongs to the eukaryotic ribosomal protein eS19 family. In terms of assembly, part of the 30S ribosomal subunit.

May be involved in maturation of the 30S ribosomal subunit. This Thermococcus kodakarensis (strain ATCC BAA-918 / JCM 12380 / KOD1) (Pyrococcus kodakaraensis (strain KOD1)) protein is Small ribosomal subunit protein eS19.